A 124-amino-acid chain; its full sequence is Small ribosomal subunit protein bS6 (124 aa).

The interval 100-124 is disordered; that stretch reads KERRAARQKTGETQENVSQEESSTN. A compositionally biased stretch (polar residues) spans 110–124; that stretch reads GETQENVSQEESSTN.

The protein belongs to the bacterial ribosomal protein bS6 family.

Functionally, binds together with bS18 to 16S ribosomal RNA. This is Small ribosomal subunit protein bS6 from Fervidobacterium nodosum (strain ATCC 35602 / DSM 5306 / Rt17-B1).